Consider the following 343-residue polypeptide: uncharacterized protein (343 aa).

Positions 66-89 are disordered; it reads TQNPEPTSASTPPSASASSLPNGA. Residues 71 to 84 are compositionally biased toward low complexity; the sequence is PTSASTPPSASASS. Residues 96–116 traverse the membrane as a helical segment; the sequence is GVIAGPIVGVLGGLIVLVIIF. Disordered regions lie at residues 161–191 and 252–343; these read GGYQ…NDTR and GRPL…SEHF. The segment covering 165-188 has biased composition (polar residues); the sequence is MHSTPWASSPRNSTIPQRSQSFYN. Residues 280-289 show a composition bias toward basic and acidic residues; sequence SNDDSDETKL. The span at 290–299 shows a compositional bias: low complexity; the sequence is KQSSTESSSE. Composition is skewed to basic and acidic residues over residues 301 to 311 and 322 to 333; these read LDEKDKFDKNS and SSYEHEISEEHK. Over residues 334–343 the composition is skewed to basic residues; it reads KHSKKRSEHF.

The protein resides in the golgi apparatus membrane. This is an uncharacterized protein from Schizosaccharomyces pombe (strain 972 / ATCC 24843) (Fission yeast).